We begin with the raw amino-acid sequence, 128 residues long: Fluoride-specific ion channel FluC (128 aa).

4 consecutive transmembrane segments (helical) span residues 5–25 (IVAI…LALA), 35–55 (LGTL…AVVF), 67–87 (LFVI…SVEV), and 96–116 (FGWA…LTAL). Na(+) is bound by residues Gly75 and Thr78.

It belongs to the fluoride channel Fluc/FEX (TC 1.A.43) family.

Its subcellular location is the cell inner membrane. It catalyses the reaction fluoride(in) = fluoride(out). Its activity is regulated as follows. Na(+) is not transported, but it plays an essential structural role and its presence is essential for fluoride channel function. Fluoride-specific ion channel. Important for reducing fluoride concentration in the cell, thus reducing its toxicity. In Burkholderia ambifaria (strain MC40-6), this protein is Fluoride-specific ion channel FluC.